The following is a 402-amino-acid chain: MSRVSQARNLGKYFLLIDNMLVVLGFFVVFPLISIRFVDQMGWAAVMVGIALGLRQFIQQGLGIFGGAIADRFGAKPMIVTGMLMRAAGFATMGIAHEPWLLWFSCFLSGLGGTLFDPPRSALVVKLIRPEQRDRFFSLLMMQDSAGAVIGALLGSWLLQYDFRLVCATGAILFILCALFNAWLLPAWKLSTVRTPVREGMRRVMSDKRFVTYVLTLAGYYMLAVQVMLMLPIMVNDIAGSPAAVKWMYAIEACLSLTLLYPIARWSEKRFRLEHRLMAGLLVMSLSMLPIGMVGNLQQLFTLICAFYIGSVIAEPARETLSASLADARARGSYMGFSRLGLAIGGAIGYIGGGWLFDMGKALAQPELPWMMLGIIGFITFLALGWQFSHKRTPRRMLEPGA.

The Cytoplasmic portion of the chain corresponds to 1–12; sequence MSRVSQARNLGK. The helical transmembrane segment at 13–33 threads the bilayer; sequence YFLLIDNMLVVLGFFVVFPLI. Residues 34–98 are Periplasmic-facing; sequence SIRFVDQMGW…GFATMGIAHE (65 aa). The chain crosses the membrane as a helical span at residues 99–116; it reads PWLLWFSCFLSGLGGTLF. Residues 117–138 are Cytoplasmic-facing; that stretch reads DPPRSALVVKLIRPEQRDRFFS. Residues 139–159 traverse the membrane as a helical segment; it reads LLMMQDSAGAVIGALLGSWLL. Topologically, residues 160–164 are periplasmic; sequence QYDFR. Residues 165–185 form a helical membrane-spanning segment; it reads LVCATGAILFILCALFNAWLL. The Cytoplasmic segment spans residues 186–213; that stretch reads PAWKLSTVRTPVREGMRRVMSDKRFVTY. Residues 214–234 traverse the membrane as a helical segment; it reads VLTLAGYYMLAVQVMLMLPIM. The Periplasmic segment spans residues 235 to 243; sequence VNDIAGSPA. A helical membrane pass occupies residues 244–264; it reads AVKWMYAIEACLSLTLLYPIA. Topologically, residues 265-276 are cytoplasmic; it reads RWSEKRFRLEHR. The chain crosses the membrane as a helical span at residues 277–297; it reads LMAGLLVMSLSMLPIGMVGNL. The Periplasmic portion of the chain corresponds to 298-299; that stretch reads QQ. Residues 300 to 320 traverse the membrane as a helical segment; that stretch reads LFTLICAFYIGSVIAEPARET. Residues 321–339 lie on the Cytoplasmic side of the membrane; it reads LSASLADARARGSYMGFSR. A helical transmembrane segment spans residues 340–360; sequence LGLAIGGAIGYIGGGWLFDMG. The Periplasmic portion of the chain corresponds to 361–367; the sequence is KALAQPE. A helical membrane pass occupies residues 368–388; sequence LPWMMLGIIGFITFLALGWQF. The Cytoplasmic portion of the chain corresponds to 389-402; that stretch reads SHKRTPRRMLEPGA.

Belongs to the major facilitator superfamily. DHA1 family. MdtH (TC 2.A.1.2.21) subfamily.

The protein resides in the cell inner membrane. The protein is Multidrug resistance protein MdtH of Salmonella typhimurium (strain LT2 / SGSC1412 / ATCC 700720).